A 1441-amino-acid chain; its full sequence is Lysophospholipase NTE1 (1441 aa).

At 1 to 22 (MWLTSYVLPRLKNILLLQFHIT) the chain is on the lumenal side. The helical transmembrane segment at 23–43 (LPLNYLVLLLLSTVIITYLFL) threads the bilayer. The Cytoplasmic segment spans residues 44-1441 (RTRILSNYSQ…ENMLQRRNSI (1398 aa)). Disordered stretches follow at residues 154-173 (SNPSGDAAANATAFEPPSND), 210-236 (THLNEGTHPSTTNNTPGPGSPNLTGEI), 376-445 (QDDT…NSSS), and 551-585 (NRTGGKMASHSKRLNGSSRSNSRTDRSESFDHFRN). Polar residues predominate over residues 376–388 (QDDTGSSASTIQK). Over residues 572-585 (SRTDRSESFDHFRN) the composition is skewed to basic and acidic residues. A nucleoside 3',5'-cyclic phosphate is bound by residues 592-718 (NQFS…LTNS) and 707-836 (IYLK…VAKK). Residues 1137–1301 (LVLGGGGARG…VDNLPVTEMT (165 aa)) form the PNPLA domain. Residues 1141 to 1146 (GGGARG) carry the GXGXXG motif. The short motif at 1168 to 1172 (GTSIG) is the GXSXG element. Ser1170 serves as the catalytic Nucleophile. The Proton acceptor role is filled by Asp1288. Positions 1288 to 1290 (DGG) match the DGA/G motif.

This sequence belongs to the NTE family.

It is found in the endoplasmic reticulum membrane. The enzyme catalyses a 1-acyl-sn-glycero-3-phosphocholine + H2O = sn-glycerol 3-phosphocholine + a fatty acid + H(+). Its activity is regulated as follows. Inhibited by organophosphorus esters. In terms of biological role, intracellular phospholipase B that catalyzes the double deacylation of phosphatidylcholine (PC) to glycerophosphocholine (GroPCho). Plays an important role in membrane lipid homeostasis. Responsible for the rapid PC turnover in response to inositol, elevated temperatures, or when choline is present in the growth medium. The polypeptide is Lysophospholipase NTE1 (NTE1) (Kluyveromyces lactis (strain ATCC 8585 / CBS 2359 / DSM 70799 / NBRC 1267 / NRRL Y-1140 / WM37) (Yeast)).